The primary structure comprises 107 residues: uncharacterized protein (107 aa).

Residues 86 to 107 (QVSNHEEDADVLETQDDNAEQV) form a disordered region. Residues 92–107 (EDADVLETQDDNAEQV) are compositionally biased toward acidic residues.

This is an uncharacterized protein from Rickettsia prowazekii (strain Madrid E).